The primary structure comprises 142 residues: Potassium voltage-gated channel subfamily E regulatory beta subunit 5 (142 aa).

2 N-linked (GlcNAc...) asparagine glycosylation sites follow: Asn2 and Asn25. A helical membrane pass occupies residues 61–81; sequence LYILLIMIFYACLAGGLILAY. The Cytoplasmic segment spans residues 82 to 142; the sequence is TRSRKLVEAK…PALAQGAERV (61 aa). The tract at residues 119-142 is disordered; sequence SQAEGRRQLASEGLPALAQGAERV.

It belongs to the potassium channel KCNE family. As to quaternary structure, interacts with KCNQ1; impairs KCNQ1 localization in lipid rafts and only conducts current upon strong and continued depolarization. Highly expressed in heart, skeletal muscle, brain, spinal cord and placenta.

Its subcellular location is the membrane. Potassium channel ancillary subunit that is essential for generation of some native K(+) currents by virtue of formation of heteromeric ion channel complex with voltage-gated potassium (Kv) channel pore-forming alpha subunits. Functions as an inhibitory beta-subunit of the repolarizing cardiac potassium ion channel KCNQ1. The sequence is that of Potassium voltage-gated channel subfamily E regulatory beta subunit 5 (KCNE5) from Homo sapiens (Human).